The chain runs to 185 residues: Putative F-box protein At3g17400 (185 aa).

An F-box domain is found at 1-47; the sequence is MMTLSDLPSDLAEEVLSKIPVTSLRGVRATCKKWNTLSKDRSFTRKH.

The sequence is that of Putative F-box protein At3g17400 from Arabidopsis thaliana (Mouse-ear cress).